Here is a 741-residue protein sequence, read N- to C-terminus: Melanoma-associated antigen D4 (741 aa).

A compositionally biased stretch (polar residues) spans 1 to 13; that stretch reads MAEGSFSVQSESY. 4 disordered regions span residues 1-27, 136-206, 247-296, and 323-379; these read MAEGSFSVQSESYSVEDMDEGSDEVGE, RVAT…EGPS, MAFP…KALA, and PEGA…QPSL. The span at 14–27 shows a compositional bias: acidic residues; that stretch reads SVEDMDEGSDEVGE. Polar residues-rich tracts occupy residues 140 to 151 and 187 to 196; these read PQVSGEDTQPTT and TSAQSQTGSP. The span at 354 to 363 shows a compositional bias: acidic residues; it reads DEYESSEEER. One can recognise an MAGE domain in the interval 413–611; that stretch reads LQERANKLVK…REWKAHFLEA (199 aa). Residues 700–720 form a disordered region; the sequence is VSSGTNGGASTSVLDGPSTSS. Polar residues predominate over residues 701–720; it reads SSGTNGGASTSVLDGPSTSS.

In terms of assembly, interacts with TRIM27. Expressed only in brain and ovary among normal tissues. Isoform 1 and isoform 2 are specifically expressed in glioma cells among cancer cells. Detected in some renal cell carcinoma samples.

In terms of biological role, may enhance ubiquitin ligase activity of RING-type zinc finger-containing E3 ubiquitin-protein ligases. Proposed to act through recruitment and/or stabilization of the Ubl-conjugating enzyme (E2) at the E3:substrate complex. The sequence is that of Melanoma-associated antigen D4 (MAGED4) from Homo sapiens (Human).